A 209-amino-acid chain; its full sequence is GTP-binding protein RHB1 (209 aa).

At methionine 1 the chain carries N-acetylmethionine. GTP is bound by residues glycine 28, lysine 29, threonine 30, threonine 31, valine 42, tyrosine 45, threonine 48, aspartate 132, and alanine 172. Position 30 (threonine 30) interacts with Mg(2+). Positions 45 to 53 match the Effector region motif; the sequence is YYPTIENEF. Threonine 48 contributes to the Mg(2+) binding site. Cysteine 206 is subject to Cysteine methyl ester. Residue cysteine 206 is the site of S-farnesyl cysteine attachment. Positions 207–209 are cleaved as a propeptide — removed in mature form; that stretch reads SIM.

It belongs to the small GTPase superfamily. Rheb family. Interacts with BTN2.

It is found in the cell membrane. It carries out the reaction GTP + H2O = GDP + phosphate + H(+). Binds GTP and exhibits intrinsic GTPase activity. Involved in the regulation of arginine and lysine uptake. Acts through the CAN1 permease. This Saccharomyces cerevisiae (strain ATCC 204508 / S288c) (Baker's yeast) protein is GTP-binding protein RHB1 (RHB1).